The sequence spans 520 residues: Protein RCC2 (520 aa).

The interval 1-78 (MPRKKGAAWE…RPATAGKAAG (78 aa)) is disordered. Serine 14 bears the Phosphoserine mark. Threonine 18 carries the post-translational modification Phosphothreonine. Basic residues predominate over residues 22–34 (GPRRRGGPAGRKR). Phosphoserine is present on residues serine 41, serine 42, serine 43, serine 44, serine 48, and serine 49. Residues 69–78 (RPATAGKAAG) are compositionally biased toward low complexity. Residues lysine 90 and lysine 122 each carry the N6-acetyllysine modification. RCC1 repeat units follow at residues 101–163 (KGQL…SLLI), 166–217 (EGKL…ALTD), 219–269 (GSVF…LMDC), 271–345 (GNLY…VLDS), 346–399 (QKRV…AVSE), 401–445 (GGLF…VAAD), and 446–499 (ESTI…VIAR). Lysine 291 bears the N6-acetyllysine mark. The interval 316–323 (KTKDGQIL) is required for interaction with RAC1. Position 340 is a phosphothreonine (threonine 340). An N6-acetyllysine modification is found at lysine 375.

In terms of assembly, interacts with RAC1. Interacts with nucleotide-free and with GDP and GTP-bound forms of RAC1, with a slight preference for GDP-bound RAC1. Binds preferentially to the nucleotide-free form of RAC1. Interacts with CORO1C. Interacts with microtubules.

It is found in the nucleus. The protein resides in the nucleolus. It localises to the cytoplasm. The protein localises to the cytoskeleton. Its subcellular location is the chromosome. It is found in the centromere. The protein resides in the spindle. It localises to the midbody. The protein localises to the cell membrane. Functionally, multifunctional protein that may affect its functions by regulating the activity of small GTPases, such as RAC1 and RALA. Required for normal progress through the cell cycle, both during interphase and during mitosis. Required for the presence of normal levels of MAD2L1, AURKB and BIRC5 on inner centromeres during mitosis, and for normal attachment of kinetochores to mitotic spindles. Required for normal organization of the microtubule cytoskeleton in interphase cells. Functions as a guanine nucleotide exchange factor (GEF) for RALA. Interferes with the activation of RAC1 by guanine nucleotide exchange factors. Prevents accumulation of active, GTP-bound RAC1, and suppresses RAC1-mediated reorganization of the actin cytoskeleton and formation of membrane protrusions. Required for normal cellular responses to contacts with the extracellular matrix of adjacent cells, and for directional cell migration in response to a fibronectin gradient (in vitro). The sequence is that of Protein RCC2 (Rcc2) from Mus musculus (Mouse).